Consider the following 41-residue polypeptide: Large ribosomal subunit protein bL36 (41 aa).

It belongs to the bacterial ribosomal protein bL36 family.

The protein is Large ribosomal subunit protein bL36 of Gluconobacter oxydans (strain 621H) (Gluconobacter suboxydans).